The sequence spans 194 residues: Adenylate kinase (194 aa).

10–15 (GAGKGT) contacts ATP. The interval 30-59 (STGDMLRAAVAQQSEIGKRAKAVMDAGQLV) is NMP. Residues T31, R36, 57–59 (QLV), 85–88 (GYPR), and Q92 contribute to the AMP site. The interval 126 to 142 (SRVAETIAKGAQVRSDD) is LID. Position 127 (R127) interacts with ATP. 2 residues coordinate AMP: R139 and R150. An ATP-binding site is contributed by A178.

It belongs to the adenylate kinase family. Monomer.

The protein localises to the cytoplasm. The enzyme catalyses AMP + ATP = 2 ADP. The protein operates within purine metabolism; AMP biosynthesis via salvage pathway; AMP from ADP: step 1/1. Its function is as follows. Catalyzes the reversible transfer of the terminal phosphate group between ATP and AMP. Plays an important role in cellular energy homeostasis and in adenine nucleotide metabolism. The sequence is that of Adenylate kinase from Brucella melitensis biotype 1 (strain ATCC 23456 / CCUG 17765 / NCTC 10094 / 16M).